The primary structure comprises 1410 residues: Slit homolog 1 protein (1410 aa).

Positions 1–16 are cleaved as a signal peptide; the sequence is MLICFIFILLIPESAT. The region spanning 17–43 is the LRRNT 1 domain; that stretch reads CPAECVCVDRTVSCVGQQLTEVPQNIP. LRR repeat units lie at residues 22 to 42, 43 to 66, 67 to 90, 91 to 114, 116 to 138, 140 to 162, 163 to 186, 219 to 242, 286 to 309, 310 to 333, 335 to 357, 358 to 381, 383 to 405, 407 to 430, 442 to 465, 489 to 510, 511 to 535, 536 to 559, 561 to 583, and 585 to 607; these read VCVD…PQNI, PNDT…DFSS, LMNL…SFSS, LVFL…VFQN, LKLT…QLQG, EFLE…VISS, WVSL…SNAR, TVCA…FMTC, PPST…SFKN, LKNL…AFLG, HNLH…TFEG, LGSL…TFDH, PKLS…TFQN, TSLS…WLAQ, ARCE…KFKC, CDCY…PTSI, PRFA…NIHV, LENL…SFEK, SKLR…VLDE, and SNLE…FFNK. The LRRCT 1 domain maps to 195 to 243; the sequence is NPWNCDCRLRWMRKWLEKAEGQNKTVCATPLNLQGSSIEILQDKFMTCS. The LRRNT 2 domain occupies 259–286; sequence ICPLPCTCTGTTVDCRDSGLTYVPTNLP. Residues 417-466 form the LRRCT 2 domain; it reads NPLICDCNLQWLAQINLQKNIETSGARCEQPKRLRKKKFATLPPNKFKCK. The region spanning 484–511 is the LRRNT 3 domain; that stretch reads ICPTQCDCYGTTVDCNKRGLNTIPTSIP. In terms of domain architecture, LRRCT 3 spans 619-671; that stretch reads NDLLCDCRILPLMSWLRSNSSHSIDIPPCQQFQYSDNESDKQRCAAFPEETCS. The 27-residue stretch at 677–703 folds into the LRRNT 4 domain; the sequence is CPPKCSCLDRVVRCSNKNLTSFPSRIP. LRR repeat units follow at residues 681-703, 704-726, 727-750, 752-774, 775-798, and 800-823; these read CSCL…SRIP, FDTT…DLNR, LYSL…TFSN, TRLS…AFNG, LNAL…AFSN, and TSIT…WFSK. Residues 810–859 form the LRRCT 4 domain; the sequence is NSLYCDCNMAWFSKWIKSKFIEAGIARCEYPNTVSNQLLLTAQPYQFTCD. EGF-like domains follow at residues 871–906 and 908–945; these read DLCL…VHCE and QIDA…DYCE. 18 cysteine pairs are disulfide-bonded: Cys-873–Cys-884, Cys-878–Cys-894, Cys-896–Cys-905, Cys-912–Cys-923, Cys-917–Cys-933, Cys-935–Cys-944, Cys-951–Cys-962, Cys-956–Cys-971, Cys-973–Cys-982, Cys-989–Cys-1002, Cys-996–Cys-1011, Cys-1013–Cys-1022, Cys-1029–Cys-1040, Cys-1034–Cys-1049, Cys-1051–Cys-1060, Cys-1076–Cys-1086, Cys-1081–Cys-1097, and Cys-1099–Cys-1108. The EGF-like 1; calcium-binding domain maps to 947–983; it reads NIDDCVNSKCENGGKCVDLINSYRCDCPMEYEGKHCE. The EGF-like 3 domain maps to 985 to 1023; sequence KLEYCTKKLNPCENNGKCIPINGSYSCMCSPGFTGNNCE. The EGF-like 2; calcium-binding domain occupies 1025–1061; that stretch reads NIDDCKNVECQNGGSCVDGILSYDCLCRPGYAGQYCE. Residues 1072 to 1109 form the EGF-like 4 domain; the sequence is KTDACQQSACGQGECVASQNSSDFTCKCHEGFSGPSCD. In terms of domain architecture, Laminin G-like spans 1112 to 1285; sequence MSVGFKNPGA…LENVNTEQSC (174 aa). Residues 1197–1221 form an LRR 27 repeat; that stretch reads TSERKCFLQIDKNPVQIVENSGKSD. Cystine bridges form between Cys-1259/Cys-1285, Cys-1292/Cys-1302, Cys-1297/Cys-1314, Cys-1316/Cys-1325, Cys-1332/Cys-1368, Cys-1346/Cys-1382, Cys-1357/Cys-1398, and Cys-1361/Cys-1400. One can recognise an EGF-like 5 domain in the interval 1288–1326; sequence TVNFCAGIDCGNGKCTNNALSPKGYMCQCDSHFSGEHCD. The CTCK domain maps to 1332-1406; that stretch reads CDKQKFRRHH…QCQCEPTKSV (75 aa).

As to quaternary structure, interacts with eva-1.

The protein localises to the secreted. In terms of biological role, functions as a ligand for sax-3 receptor during larval development. Acts via the sax-3/Robo receptor to direct ventral axon guidance and guidance at the midline during embryonic development. This Caenorhabditis elegans protein is Slit homolog 1 protein (slt-1).